The sequence spans 285 residues: Chalcone synthase 6-4 (285 aa).

C60 is an active-site residue.

It belongs to the thiolase-like superfamily. Chalcone/stilbene synthases family.

It catalyses the reaction (E)-4-coumaroyl-CoA + 3 malonyl-CoA + 3 H(+) = 2',4,4',6'-tetrahydroxychalcone + 3 CO2 + 4 CoA. It functions in the pathway secondary metabolite biosynthesis; flavonoid biosynthesis. Functionally, the primary product of this enzyme is 4,2',4',6'-tetrahydroxychalcone (also termed naringenin-chalcone or chalcone) which can under specific conditions spontaneously isomerize into naringenin. This is Chalcone synthase 6-4 (CHS6-4) from Medicago sativa (Alfalfa).